The chain runs to 450 residues: UDP-N-acetylmuramoylalanine--D-glutamate ligase (450 aa).

An ATP-binding site is contributed by 119–125 (GSNGKTT).

The protein belongs to the MurCDEF family.

It localises to the cytoplasm. It carries out the reaction UDP-N-acetyl-alpha-D-muramoyl-L-alanine + D-glutamate + ATP = UDP-N-acetyl-alpha-D-muramoyl-L-alanyl-D-glutamate + ADP + phosphate + H(+). It functions in the pathway cell wall biogenesis; peptidoglycan biosynthesis. Its function is as follows. Cell wall formation. Catalyzes the addition of glutamate to the nucleotide precursor UDP-N-acetylmuramoyl-L-alanine (UMA). The polypeptide is UDP-N-acetylmuramoylalanine--D-glutamate ligase (Bacillus cereus (strain B4264)).